We begin with the raw amino-acid sequence, 1767 residues long: Endo-alpha-N-acetylgalactosaminidase (1767 aa).

The N-terminal stretch at methionine 1–aspartate 39 is a signal peptide. 2 stretches are compositionally biased toward basic and acidic residues: residues asparagine 63–glutamate 75 and aspartate 84–alanine 111. Disordered stretches follow at residues asparagine 63–valine 137 and valine 301–valine 324. Over residues alanine 112–glutamate 124 the composition is skewed to low complexity. Composition is skewed to basic and acidic residues over residues threonine 127–valine 137 and aspartate 304–valine 324. Aspartate 577, asparagine 579, aspartate 581, lysine 583, and aspartate 588 together coordinate Ca(2+). Residues glycine 602–phenylalanine 893 form a catalytic region. A substrate-binding site is contributed by aspartate 658. Aspartate 764 functions as the Nucleophile in the catalytic mechanism. Glutamate 796 functions as the Proton donor/acceptor in the catalytic mechanism. Residues aspartate 1233, glutamate 1235, glutamate 1281, tryptophan 1284, and aspartate 1411 each coordinate Ca(2+). An LPXTG sorting signal motif is present at residues leucine 1735 to glycine 1739. Threonine 1738 carries the post-translational modification Pentaglycyl murein peptidoglycan amidated threonine. Residues glycine 1739–aspartate 1767 constitute a propeptide, removed by sortase.

The protein belongs to the glycosyl hydrolase 101 family. A subfamily.

It localises to the secreted. The protein localises to the cell wall. It carries out the reaction a 3-O-[beta-D-galactosyl-(1-&gt;3)-N-acetyl-alpha-D-galactosaminyl]-L-threonyl-[protein] + H2O = beta-D-galactosyl-(1-&gt;3)-N-acetyl-D-galactosamine + L-threonyl-[protein]. The enzyme catalyses a 3-O-[beta-D-galactosyl-(1-&gt;3)-N-acetyl-alpha-D-galactosaminyl]-L-seryl-[protein] + H2O = beta-D-galactosyl-(1-&gt;3)-N-acetyl-D-galactosamine + L-seryl-[protein]. Involved in the breakdown of mucin-type O-linked glycans. Specifically removes the T-antigen disaccharide (Gal-beta-1,3-GalNAc-alpha) from extracellular host glycoproteins. Representative of a broadly important class of virulence factors. The sequence is that of Endo-alpha-N-acetylgalactosaminidase from Streptococcus pneumoniae (strain ATCC BAA-255 / R6).